A 179-amino-acid polypeptide reads, in one-letter code: Large ribosomal subunit protein uL6 (179 aa).

Belongs to the universal ribosomal protein uL6 family. Part of the 50S ribosomal subunit.

Its function is as follows. This protein binds to the 23S rRNA, and is important in its secondary structure. It is located near the subunit interface in the base of the L7/L12 stalk, and near the tRNA binding site of the peptidyltransferase center. The sequence is that of Large ribosomal subunit protein uL6 from Bacillus subtilis (strain 168).